The sequence spans 416 residues: Casein kinase I isoform epsilon (416 aa).

One can recognise a Protein kinase domain in the interval 9-277 (YRLGRKIGSG…YLRQLFRNLF (269 aa)). ATP-binding positions include 15–23 (IGSGSFGDI) and K38. The active-site Proton acceptor is D128. The segment covering 301 to 318 (PEDMDRERREHEREERMG) has biased composition (basic and acidic residues). The interval 301–416 (PEDMDRERRE…TSVPFDHLGK (116 aa)) is disordered. The span at 324 to 338 (ATRALPPGPPAGATG) shows a compositional bias: low complexity. 2 stretches are compositionally biased toward polar residues: residues 350–365 (STPT…TSPR) and 400–409 (SRISASQTSV).

This sequence belongs to the protein kinase superfamily. CK1 Ser/Thr protein kinase family. Casein kinase I subfamily. Monomer. Component of the circadian core oscillator, which includes the CRY proteins, CLOCK, or NPAS2, BMAL1 or BMAL2, CSNK1E, and the PER proteins.

The protein resides in the cytoplasm. The enzyme catalyses L-seryl-[protein] + ATP = O-phospho-L-seryl-[protein] + ADP + H(+). It carries out the reaction L-threonyl-[protein] + ATP = O-phospho-L-threonyl-[protein] + ADP + H(+). Its function is as follows. Casein kinases are operationally defined by their preferential utilization of acidic proteins such as caseins as substrates. Can phosphorylate a large number of proteins. Participates in Wnt signaling. Phosphorylates DVL1. Central component of the circadian clock. May act as a negative regulator of circadian rhythmicity by phosphorylating PER1 and PER2. Retains PER1 in the cytoplasm. The polypeptide is Casein kinase I isoform epsilon (CSNK1E) (Gallus gallus (Chicken)).